We begin with the raw amino-acid sequence, 475 residues long: Bifunctional protein HldE (475 aa).

The interval 1–318 is ribokinase; sequence MMQYSLKFNQ…ENAIHHREET (318 aa). 195–198 provides a ligand contact to ATP; sequence NMAE. Residue aspartate 264 is part of the active site. The segment at 344-475 is cytidylyltransferase; that stretch reads MTNGCFDILH…DVIKKIQAIR (132 aa).

The protein in the N-terminal section; belongs to the carbohydrate kinase PfkB family. It in the C-terminal section; belongs to the cytidylyltransferase family. Homodimer.

The catalysed reaction is D-glycero-beta-D-manno-heptose 7-phosphate + ATP = D-glycero-beta-D-manno-heptose 1,7-bisphosphate + ADP + H(+). It catalyses the reaction D-glycero-beta-D-manno-heptose 1-phosphate + ATP + H(+) = ADP-D-glycero-beta-D-manno-heptose + diphosphate. The protein operates within nucleotide-sugar biosynthesis; ADP-L-glycero-beta-D-manno-heptose biosynthesis; ADP-L-glycero-beta-D-manno-heptose from D-glycero-beta-D-manno-heptose 7-phosphate: step 1/4. It participates in nucleotide-sugar biosynthesis; ADP-L-glycero-beta-D-manno-heptose biosynthesis; ADP-L-glycero-beta-D-manno-heptose from D-glycero-beta-D-manno-heptose 7-phosphate: step 3/4. Its pathway is bacterial outer membrane biogenesis; LOS core biosynthesis. Functionally, catalyzes the phosphorylation of D-glycero-D-manno-heptose 7-phosphate at the C-1 position to selectively form D-glycero-beta-D-manno-heptose-1,7-bisphosphate. Catalyzes the ADP transfer from ATP to D-glycero-beta-D-manno-heptose 1-phosphate, yielding ADP-D-glycero-beta-D-manno-heptose. The chain is Bifunctional protein HldE from Haemophilus ducreyi (strain 35000HP / ATCC 700724).